A 257-amino-acid chain; its full sequence is MLILVSPAKTLDFEQPPLTQVYSQPDFLYHSQELIQVCRQLAPSDIATLMKVSDKIAGLNAARFEGWQPQFTLENAKQAIFAFRGDVYTGFDADTLSSQELERAQSQLRILSGLYGLLRPLDLILPYRLEMGTALNNARGKNLYDFWGDILTLAVNKTLTEQGDRIVVNLASNEYFKAIKVRQLDGQLITPVFKDYKNGQYKVISFFAKRARGMMARYIIKQQINSIDELIKFDAAGYYYSEEHSTQSEPTFLREAQ.

The protein belongs to the UPF0246 family.

The polypeptide is UPF0246 protein Sputcn32_1053 (Shewanella putrefaciens (strain CN-32 / ATCC BAA-453)).